We begin with the raw amino-acid sequence, 180 residues long: Translation initiation factor IF-3 (180 aa).

The protein belongs to the IF-3 family. As to quaternary structure, monomer.

It is found in the cytoplasm. Functionally, IF-3 binds to the 30S ribosomal subunit and shifts the equilibrium between 70S ribosomes and their 50S and 30S subunits in favor of the free subunits, thus enhancing the availability of 30S subunits on which protein synthesis initiation begins. The sequence is that of Translation initiation factor IF-3 from Pectobacterium atrosepticum (strain SCRI 1043 / ATCC BAA-672) (Erwinia carotovora subsp. atroseptica).